The following is a 93-amino-acid chain: Small ribosomal subunit protein uS19 (93 aa).

It belongs to the universal ribosomal protein uS19 family.

In terms of biological role, protein S19 forms a complex with S13 that binds strongly to the 16S ribosomal RNA. In Cutibacterium acnes (strain DSM 16379 / KPA171202) (Propionibacterium acnes), this protein is Small ribosomal subunit protein uS19.